The sequence spans 539 residues: Probable transcription factor GLK2 (539 aa).

Residues 86-218 are disordered; the sequence is FASSPDDEPP…NSHGKRKVKV (133 aa). Low complexity-rich tracts occupy residues 99 to 111 and 121 to 130; these read SAPGPGEPAAAAG and AAAAAAAAAA. Basic and acidic residues predominate over residues 144 to 161; the sequence is KKDDEERSSSLPEEKDAK. Residues 212 to 271 form the HTH myb-type domain; it reads GKRKVKVDWTPELHRRFVQAVEQLGIDKAVPSRILELMGIECLTRHNIASHLQKYRSHRK. Residues 242 to 267 constitute a DNA-binding region (H-T-H motif); it reads PSRILELMGIECLTRHNIASHLQKYR.

As to expression, expressed in leaves.

The protein localises to the nucleus. Functionally, probable transcriptional activator that promotes chloroplast development. Acts as an activator of nuclear photosynthetic genes involved in chlorophyll biosynthesis, light harvesting, and electron transport. The protein is Probable transcription factor GLK2 (GLK2) of Oryza sativa subsp. japonica (Rice).